Reading from the N-terminus, the 180-residue chain is Superoxide dismutase [Cu-Zn] (180 aa).

A signal peptide spans 1-19; the sequence is MFMNLLSQVSNAIFPQVEA. Positions 68, 70, and 85 each coordinate Cu cation. Cysteine 79 and cysteine 171 form a disulfide bridge. Zn(2+) contacts are provided by histidine 85, histidine 93, histidine 102, and aspartate 105. A Cu cation-binding site is contributed by histidine 142.

It belongs to the Cu-Zn superoxide dismutase family. Homodimer. Requires Cu cation as cofactor. Zn(2+) is required as a cofactor.

It is found in the cytoplasm. The enzyme catalyses 2 superoxide + 2 H(+) = H2O2 + O2. In terms of biological role, destroys radicals which are normally produced within the cells and which are toxic to biological systems. Required for normal brood size. May be involved in regulating mpk-1 phosphorylation downstream of phosphatase ptp-2 during oocyte maturation. This Caenorhabditis briggsae protein is Superoxide dismutase [Cu-Zn].